The chain runs to 70 residues: Small ribosomal subunit protein bS21B (70 aa).

Belongs to the bacterial ribosomal protein bS21 family.

The polypeptide is Small ribosomal subunit protein bS21B (Burkholderia thailandensis (strain ATCC 700388 / DSM 13276 / CCUG 48851 / CIP 106301 / E264)).